A 102-amino-acid chain; its full sequence is Small ribosomal subunit protein uS10 (102 aa).

It belongs to the universal ribosomal protein uS10 family. Part of the 30S ribosomal subunit.

In terms of biological role, involved in the binding of tRNA to the ribosomes. This is Small ribosomal subunit protein uS10 from Gluconacetobacter diazotrophicus (strain ATCC 49037 / DSM 5601 / CCUG 37298 / CIP 103539 / LMG 7603 / PAl5).